A 392-amino-acid chain; its full sequence is Succinate--CoA ligase [ADP-forming] subunit beta (392 aa).

The ATP-grasp domain occupies 9–248; the sequence is KGLFRDYGVS…LHEEDPTEVK (240 aa). Residues Lys50, 57-59, Val106, and Glu111 each bind ATP; that span reads GRG. 2 residues coordinate Mg(2+): Asn203 and Asp217. Substrate-binding positions include Asn268 and 325–327; that span reads GIV.

This sequence belongs to the succinate/malate CoA ligase beta subunit family. Heterotetramer of two alpha and two beta subunits. Requires Mg(2+) as cofactor.

The catalysed reaction is succinate + ATP + CoA = succinyl-CoA + ADP + phosphate. It catalyses the reaction GTP + succinate + CoA = succinyl-CoA + GDP + phosphate. Its pathway is carbohydrate metabolism; tricarboxylic acid cycle; succinate from succinyl-CoA (ligase route): step 1/1. Its function is as follows. Succinyl-CoA synthetase functions in the citric acid cycle (TCA), coupling the hydrolysis of succinyl-CoA to the synthesis of either ATP or GTP and thus represents the only step of substrate-level phosphorylation in the TCA. The beta subunit provides nucleotide specificity of the enzyme and binds the substrate succinate, while the binding sites for coenzyme A and phosphate are found in the alpha subunit. The polypeptide is Succinate--CoA ligase [ADP-forming] subunit beta (Salinibacter ruber (strain DSM 13855 / M31)).